A 930-amino-acid polypeptide reads, in one-letter code: Protein translocase subunit SecA (930 aa).

ATP is bound by residues Q87, 105 to 109 (GEGKT), and D516. Residues C914, C916, C925, and H926 each contribute to the Zn(2+) site.

The protein belongs to the SecA family. Monomer and homodimer. Part of the essential Sec protein translocation apparatus which comprises SecA, SecYEG and auxiliary proteins SecDF-YajC and YidC. It depends on Zn(2+) as a cofactor.

It is found in the cell inner membrane. The protein resides in the cytoplasm. The catalysed reaction is ATP + H2O + cellular proteinSide 1 = ADP + phosphate + cellular proteinSide 2.. Functionally, part of the Sec protein translocase complex. Interacts with the SecYEG preprotein conducting channel. Has a central role in coupling the hydrolysis of ATP to the transfer of proteins into and across the cell membrane, serving both as a receptor for the preprotein-SecB complex and as an ATP-driven molecular motor driving the stepwise translocation of polypeptide chains across the membrane. This chain is Protein translocase subunit SecA, found in Variovorax paradoxus (strain S110).